The primary structure comprises 1726 residues: Protein Shroom2 (1726 aa).

The 81-residue stretch at 79 to 159 (AGGCYSYWRG…ILKMIVKRRN (81 aa)) folds into the PDZ domain. Disordered regions lie at residues 294-373 (DNTK…RSDS), 425-451 (RTVA…LSPY), 657-676 (FSQL…DYSW), and 697-785 (EGRN…STYR). Polar residues predominate over residues 318-328 (VLQSTSINETS). Residues 329-338 (KIQRTEDNTE) show a composition bias toward basic and acidic residues. The span at 657–667 (FSQLDHSEKGS) shows a compositional bias: basic and acidic residues. 2 stretches are compositionally biased toward polar residues: residues 746 to 755 (SKSTAALTES) and 769 to 785 (LESM…STYR). Residues 788-877 (LQEAQARVLR…SEPEKINEVG (90 aa)) form the ASD1 domain. 6 disordered regions span residues 913–968 (PKVP…DKVT), 1007–1080 (LDAD…QCGA), 1092–1120 (KWKP…GTLP), 1166–1240 (FKKR…KNPS), 1269–1299 (SSKS…DKPP), and 1471–1499 (AQQR…VPSA). Over residues 917–926 (PKVVSSSQSE) the composition is skewed to low complexity. A compositionally biased stretch (basic and acidic residues) spans 936 to 948 (DYAKSSEGQESKR). 2 stretches are compositionally biased toward polar residues: residues 1054-1070 (NSNS…SPTR) and 1104-1119 (ETSN…SGTL). Residues 1191–1205 (SSSSLATSSESLLTA) show a composition bias toward low complexity. Residues 1209–1235 (RAQSYSPSSQDTFPPQSLQKQSPSTYP) are compositionally biased toward polar residues. Residues 1427–1721 (EELVREIVDK…QLKCLTDSLP (295 aa)) enclose the ASD2 domain.

Belongs to the shroom family. Interacts with F-actin.

The protein resides in the apical cell membrane. The protein localises to the cell junction. It localises to the tight junction. It is found in the cytoplasm. Its subcellular location is the cytoskeleton. In terms of biological role, may be involved in endothelial cell morphology changes during cell spreading. Required for eye pigmentation. In the retinal pigment epithelium, regulates the biogenesis of melanosomes and promotes their association with the apical cell surface by inducing gamma-tubulin redistribution. This Xenopus tropicalis (Western clawed frog) protein is Protein Shroom2 (shroom2).